The primary structure comprises 667 residues: Chaperone protein DnaK (667 aa).

The residue at position 196 (Thr196) is a Phosphothreonine; by autocatalysis. Disordered regions lie at residues 495–525 and 595–667; these read EANS…RKER and AGEE…GDDE. The segment covering 506–525 has biased composition (basic and acidic residues); the sequence is EKMKEEAEQHAEEDERRKER. The segment covering 595–612 has biased composition (low complexity); the sequence is AGEEIREAQQQQAQQGAA. Gly residues predominate over residues 630 to 641; that stretch reads GPAGGPTGGPAS. A compositionally biased stretch (acidic residues) spans 647-667; the sequence is DSDEEDVQDADYEVVDEGDDE.

It belongs to the heat shock protein 70 family.

In terms of biological role, acts as a chaperone. This Salinibacter ruber (strain DSM 13855 / M31) protein is Chaperone protein DnaK.